The chain runs to 260 residues: Type III pantothenate kinase (260 aa).

6-13 (DCGNTNTV) contacts ATP. 107 to 110 (GPDR) contacts substrate. Residue Asp109 is the Proton acceptor of the active site. Asp129 lines the K(+) pocket. Thr132 lines the ATP pocket. Thr184 is a binding site for substrate.

This sequence belongs to the type III pantothenate kinase family. As to quaternary structure, homodimer. The cofactor is NH4(+). Requires K(+) as cofactor.

It is found in the cytoplasm. The catalysed reaction is (R)-pantothenate + ATP = (R)-4'-phosphopantothenate + ADP + H(+). Its pathway is cofactor biosynthesis; coenzyme A biosynthesis; CoA from (R)-pantothenate: step 1/5. In terms of biological role, catalyzes the phosphorylation of pantothenate (Pan), the first step in CoA biosynthesis. The protein is Type III pantothenate kinase of Ruegeria sp. (strain TM1040) (Silicibacter sp.).